We begin with the raw amino-acid sequence, 361 residues long: Probable dual-specificity RNA methyltransferase RlmN (361 aa).

The active-site Proton acceptor is Glu-91. A Radical SAM core domain is found at 97–329 (QHYGLSVCVT…KKKGGNCVVR (233 aa)). Residues Cys-104 and Cys-340 are joined by a disulfide bond. Residues Cys-111, Cys-115, and Cys-118 each contribute to the [4Fe-4S] cluster site. Residues 163-164 (GE), Ser-195, 218-220 (SLH), and Asn-296 each bind S-adenosyl-L-methionine. The active-site S-methylcysteine intermediate is the Cys-340.

This sequence belongs to the radical SAM superfamily. RlmN family. Requires [4Fe-4S] cluster as cofactor.

It localises to the cytoplasm. It catalyses the reaction adenosine(2503) in 23S rRNA + 2 reduced [2Fe-2S]-[ferredoxin] + 2 S-adenosyl-L-methionine = 2-methyladenosine(2503) in 23S rRNA + 5'-deoxyadenosine + L-methionine + 2 oxidized [2Fe-2S]-[ferredoxin] + S-adenosyl-L-homocysteine. The enzyme catalyses adenosine(37) in tRNA + 2 reduced [2Fe-2S]-[ferredoxin] + 2 S-adenosyl-L-methionine = 2-methyladenosine(37) in tRNA + 5'-deoxyadenosine + L-methionine + 2 oxidized [2Fe-2S]-[ferredoxin] + S-adenosyl-L-homocysteine. Its function is as follows. Specifically methylates position 2 of adenine 2503 in 23S rRNA and position 2 of adenine 37 in tRNAs. In Streptococcus pneumoniae serotype 2 (strain D39 / NCTC 7466), this protein is Probable dual-specificity RNA methyltransferase RlmN.